A 217-amino-acid polypeptide reads, in one-letter code: CXXC-type zinc finger protein 4 (217 aa).

Residues 1-20 (MHRNDSQRLGKPGGAPESLQ) are disordered. The segment at 122–163 (AKKKRKRCGVCVPCKRLINCGVCSSCRNRKTGHQICKFRKCE) adopts a CXXC-type zinc-finger fold. Zn(2+) contacts are provided by cysteine 129, cysteine 132, cysteine 135, cysteine 141, cysteine 144, cysteine 147, cysteine 157, and cysteine 162.

The protein resides in the cytoplasm. In terms of biological role, acts as a negative regulator of the Wnt signaling pathway required for anterior neural structure formation. Ectopic expression induces ventralization. Binds preferentially to DNA containing cytidine-phosphate-guanosine (CpG) dinucleotides over CpH (H=A, T, and C), hemimethylated-CpG and hemimethylated-hydroxymethyl-CpG. This Xenopus laevis (African clawed frog) protein is CXXC-type zinc finger protein 4 (cxxc4).